We begin with the raw amino-acid sequence, 301 residues long: Probable 2-dehydro-3-deoxy-D-pentonate aldolase YjhH (301 aa).

Residues Thr46 and Tyr109 each act as charge relay system in the active site. Tyr135 (proton donor) is an active-site residue. Lys164 functions as the Schiff-base intermediate with substrate in the catalytic mechanism.

The protein belongs to the DapA family.

The protein resides in the cytoplasm. The catalysed reaction is 2-dehydro-3-deoxy-D-arabinonate = glycolaldehyde + pyruvate. Its function is as follows. Functions as a 2-dehydro-3-deoxy-D-pentonate aldolase. The sequence is that of Probable 2-dehydro-3-deoxy-D-pentonate aldolase YjhH (yjhH) from Escherichia coli (strain K12).